A 151-amino-acid polypeptide reads, in one-letter code: Ribosome-binding factor A (151 aa).

The disordered stretch occupies residues 120-151 (RSPKVVRDLDDTSSDDTSPDANTDTDKETDAE).

It belongs to the RbfA family. Monomer. Binds 30S ribosomal subunits, but not 50S ribosomal subunits or 70S ribosomes.

It is found in the cytoplasm. In terms of biological role, one of several proteins that assist in the late maturation steps of the functional core of the 30S ribosomal subunit. Associates with free 30S ribosomal subunits (but not with 30S subunits that are part of 70S ribosomes or polysomes). Required for efficient processing of 16S rRNA. May interact with the 5'-terminal helix region of 16S rRNA. The polypeptide is Ribosome-binding factor A (Xanthobacter autotrophicus (strain ATCC BAA-1158 / Py2)).